The following is a 205-amino-acid chain: Holliday junction branch migration complex subunit RuvA (205 aa).

Positions 1–64 (MIGRLRGIVL…EDAQLLYGFN (64 aa)) are domain I. The segment at 65-143 (DKQERALFRE…GLNGDLFNQS (79 aa)) is domain II. Positions 144-156 (SDINLPATAKQTT) are flexible linker. Positions 157 to 205 (SDADSEAEAAAALVSLGYKPQEASRMVSKIAKPGADCETLIREALRAVL) are domain III.

The protein belongs to the RuvA family. Homotetramer. Forms an RuvA(8)-RuvB(12)-Holliday junction (HJ) complex. HJ DNA is sandwiched between 2 RuvA tetramers; dsDNA enters through RuvA and exits via RuvB. An RuvB hexamer assembles on each DNA strand where it exits the tetramer. Each RuvB hexamer is contacted by two RuvA subunits (via domain III) on 2 adjacent RuvB subunits; this complex drives branch migration. In the full resolvosome a probable DNA-RuvA(4)-RuvB(12)-RuvC(2) complex forms which resolves the HJ.

It localises to the cytoplasm. Functionally, the RuvA-RuvB-RuvC complex processes Holliday junction (HJ) DNA during genetic recombination and DNA repair, while the RuvA-RuvB complex plays an important role in the rescue of blocked DNA replication forks via replication fork reversal (RFR). RuvA specifically binds to HJ cruciform DNA, conferring on it an open structure. The RuvB hexamer acts as an ATP-dependent pump, pulling dsDNA into and through the RuvAB complex. HJ branch migration allows RuvC to scan DNA until it finds its consensus sequence, where it cleaves and resolves the cruciform DNA. The sequence is that of Holliday junction branch migration complex subunit RuvA from Photorhabdus laumondii subsp. laumondii (strain DSM 15139 / CIP 105565 / TT01) (Photorhabdus luminescens subsp. laumondii).